A 1053-amino-acid chain; its full sequence is Carbamoyl phosphate synthase large chain (1053 aa).

A carboxyphosphate synthetic domain region spans residues 1–397 (MPKRTDIKKV…SFMKAKRSID (397 aa)). ATP is bound by residues R127, R167, G173, G174, E206, V208, E213, G239, I240, H241, Q282, and E294. The region spanning 131-323 (RDLMNEIGEP…IARVAAKIAI (193 aa)) is the ATP-grasp 1 domain. Residues Q282, E294, and N296 each coordinate Mg(2+). Residues Q282, E294, and N296 each coordinate Mn(2+). Positions 398–530 (TDVRTHTSPS…YSTREGTSEI (133 aa)) are oligomerization domain. Positions 531-919 (VRDKKQKILI…YKACISADNE (389 aa)) are carbamoyl phosphate synthetic domain. Residues 661 to 852 (SVLLTTLQIP…IAKIAAKVMI (192 aa)) enclose the ATP-grasp 2 domain. Residues R697, S736, L738, E743, G768, I769, H770, S771, Q811, and E823 each coordinate ATP. Residues Q811, E823, and N825 each coordinate Mg(2+). Mn(2+) contacts are provided by Q811, E823, and N825. In terms of domain architecture, MGS-like spans 918–1053 (NELPLKGNVF…TLEPLSHYLR (136 aa)). The segment at 920–1053 (LPLKGNVFVS…TLEPLSHYLR (134 aa)) is allosteric domain.

Belongs to the CarB family. In terms of assembly, composed of two chains; the small (or glutamine) chain promotes the hydrolysis of glutamine to ammonia, which is used by the large (or ammonia) chain to synthesize carbamoyl phosphate. Tetramer of heterodimers (alpha,beta)4. Mg(2+) is required as a cofactor. The cofactor is Mn(2+).

The enzyme catalyses hydrogencarbonate + L-glutamine + 2 ATP + H2O = carbamoyl phosphate + L-glutamate + 2 ADP + phosphate + 2 H(+). The catalysed reaction is hydrogencarbonate + NH4(+) + 2 ATP = carbamoyl phosphate + 2 ADP + phosphate + 2 H(+). It participates in amino-acid biosynthesis; L-arginine biosynthesis; carbamoyl phosphate from bicarbonate: step 1/1. It functions in the pathway pyrimidine metabolism; UMP biosynthesis via de novo pathway; (S)-dihydroorotate from bicarbonate: step 1/3. Its function is as follows. Large subunit of the glutamine-dependent carbamoyl phosphate synthetase (CPSase). CPSase catalyzes the formation of carbamoyl phosphate from the ammonia moiety of glutamine, carbonate, and phosphate donated by ATP, constituting the first step of 2 biosynthetic pathways, one leading to arginine and/or urea and the other to pyrimidine nucleotides. The large subunit (synthetase) binds the substrates ammonia (free or transferred from glutamine from the small subunit), hydrogencarbonate and ATP and carries out an ATP-coupled ligase reaction, activating hydrogencarbonate by forming carboxy phosphate which reacts with ammonia to form carbamoyl phosphate. The protein is Carbamoyl phosphate synthase large chain of Methanoregula boonei (strain DSM 21154 / JCM 14090 / 6A8).